The following is a 450-amino-acid chain: Salicylate synthase (450 aa).

Catalysis depends on Glu252, which acts as the Proton donor. 270-271 (GT) lines the substrate pocket. Glu297 is a binding site for Mg(2+). Residues Tyr385, Arg405, and 419–421 (GAG) each bind substrate. Positions 431 and 434 each coordinate Mg(2+). Lys438 serves as a coordination point for substrate.

It belongs to the anthranilate synthase component I family. Salicylate synthase subfamily. Monomer. Mg(2+) is required as a cofactor.

The catalysed reaction is chorismate = isochorismate. It carries out the reaction isochorismate = salicylate + pyruvate. The enzyme catalyses chorismate = prephenate. It participates in siderophore biosynthesis; mycobactin biosynthesis. Its function is as follows. Involved in the incorporation of salicylate into the virulence-conferring salicylate-based siderophore mycobactin. Catalyzes the initial conversion of chorismate to yield the intermediate isochorismate (isochorismate synthase activity), and the subsequent elimination of the enolpyruvyl side chain in a lyase reaction to give salicylate (isochorismate pyruvate-lyase activity). In the absence of magnesium, MbtI displays a chorismate mutase activity and converts chorismate to prephenate. In Mycolicibacterium paratuberculosis (strain ATCC BAA-968 / K-10) (Mycobacterium paratuberculosis), this protein is Salicylate synthase (mbtI).